The primary structure comprises 323 residues: Serine/threonine-protein phosphatase PP1-gamma catalytic subunit (323 aa).

Residue A2 is modified to N-acetylalanine. Mn(2+)-binding residues include D64, H66, D92, and N124. The active-site Proton donor is the H125. Residues H173 and H248 each contribute to the Mn(2+) site. Residues 302-323 (KKPNATRPVTPPRGMITKQAKK) form a disordered region. T307 and T311 each carry phosphothreonine.

The protein belongs to the PPP phosphatase family. PP-1 subfamily. As to quaternary structure, PP1 comprises a catalytic subunit, PPP1CA, PPP1CB or PPP1CC, which is folded into its native form by inhibitor 2 and glycogen synthetase kinase 3, and then complexed to one or several targeting or regulatory subunits. PPP1R12A, PPP1R12B and PPP1R12C mediate binding to myosin. PPP1R3A (in skeletal muscle), PPP1R3B (in liver), PPP1R3C, PPP1R3D and PPP1R3F (in brain) mediate binding to glycogen. Interacts with cyanobacterial toxin microcystin; disulfide-linked. Interacts with PPP1R3B and PPP1R7. Isoform 2 interacts with SPZ1. Interacts with CDCA2. PPP1R15A and PPP1R15B mediate binding to EIF2S1. Part of a complex containing PPP1R15B, PP1 and NCK1/2. Interacts with IKFZ1; the interaction targets PPP1CC to pericentromeric heterochromatin, dephosphorylates IKAROS, stabilizes it and prevents it from degradation. Interacts with PPP1R42; the interaction is direct. Interacts with NOM1 and PPP1R8. Component of the PTW/PP1 phosphatase complex, composed of PPP1R10/PNUTS, TOX4, WDR82, and PPP1CA or PPP1CB or PPP1CC. Interacts with PPP1R8. Interacts with isoform 1 and isoform 4 NEK2. Interacts with URI1; the interaction is phosphorylation-dependent and occurs in a growth factor-dependent manner. Interacts with FOXP3. Interacts with TMEM225 (via RVxF motif). Interacts with MKI67. Interacts with RRP1B; this targets PPP1CC to the nucleolus. Interacts with PPP1R2B. Found in a complex with PPP1CA, PPP1CC, SHC1 and PEAK1. Interacts with DYNLT4. Interacts (via RVxF motif) with FIRRM; regulates PLK1 kinase activity. Interacts with the KNL1 complex subunit KNL1; the interaction is direct and mutually exclusive with KNL1 binding to microtubules. Component of the SHOC2-MRAS-PP1c (SMP) complex consisting of SHOC2, GTP-bound M-Ras/MRAS and the catalytic subunit of protein phosphatase 1 (either PPP1CA, PPP1CB or PPP1CC). SHOC2 and PP1c preferably bind M-Ras/MRAS, but they also bind K-Ras/KRAS, N-Ras/NRAS and H-Ras/HRAS; these interactions are GTP-dependent and both SHOC2 and PP1c are required to form a stable complex. Interacts with SHOC2 in the absence of Ras GTPases. Mn(2+) serves as cofactor. Post-translationally, phosphorylated by NEK2.

Its subcellular location is the cytoplasm. The protein resides in the nucleus. The protein localises to the nucleolus. It localises to the nucleoplasm. It is found in the nucleus speckle. Its subcellular location is the chromosome. The protein resides in the centromere. The protein localises to the kinetochore. It localises to the cleavage furrow. It is found in the midbody. Its subcellular location is the mitochondrion. The protein resides in the cytoskeleton. The protein localises to the microtubule organizing center. It catalyses the reaction O-phospho-L-seryl-[protein] + H2O = L-seryl-[protein] + phosphate. It carries out the reaction O-phospho-L-threonyl-[protein] + H2O = L-threonyl-[protein] + phosphate. With respect to regulation, inactivated by binding to URI1. The phosphatase activity of the PPP1R15A-PP1 complex toward EIF2S1 is specifically inhibited by Salubrinal, a drug that protects cells from endoplasmic reticulum stress. Protein phosphatase that associates with over 200 regulatory proteins to form highly specific holoenzymes which dephosphorylate hundreds of biological targets. Protein phosphatase 1 (PP1) is essential for cell division, and participates in the regulation of glycogen metabolism, muscle contractility and protein synthesis. Dephosphorylates RPS6KB1. Involved in regulation of ionic conductances and long-term synaptic plasticity. May play an important role in dephosphorylating substrates such as the postsynaptic density-associated Ca(2+)/calmodulin dependent protein kinase II. Component of the PTW/PP1 phosphatase complex, which plays a role in the control of chromatin structure and cell cycle progression during the transition from mitosis into interphase. In balance with CSNK1D and CSNK1E, determines the circadian period length, through the regulation of the speed and rhythmicity of PER1 and PER2 phosphorylation. May dephosphorylate CSNK1D and CSNK1E. Regulates the recruitment of the SKA complex to kinetochores. Dephosphorylates the 'Ser-418' residue of FOXP3 in regulatory T-cells (Treg) from patients with rheumatoid arthritis, thereby inactivating FOXP3 and rendering Treg cells functionally defective. Together with PPP1CA (PP1-alpha subunit), dephosphorylates IFIH1/MDA5 and RIG-I leading to their activation and a functional innate immune response. Core component of the SHOC2-MRAS-PP1c (SMP) holophosphatase complex that regulates the MAPK pathway activation. The SMP complex specifically dephosphorylates the inhibitory phosphorylation at 'Ser-259' of RAF1 kinase, 'Ser-365' of BRAF kinase and 'Ser-214' of ARAF kinase, stimulating their kinase activities. Dephosphorylates MKI67 at the onset of anaphase. The SMP complex enhances the dephosphorylation activity and substrate specificity of PP1c. The polypeptide is Serine/threonine-protein phosphatase PP1-gamma catalytic subunit (PPP1CC) (Homo sapiens (Human)).